The primary structure comprises 199 residues: Crossover junction endodeoxyribonuclease RuvC (199 aa).

Catalysis depends on residues Asp7, Glu68, and Asp141. Residues Asp7, Glu68, and Asp141 each coordinate Mg(2+).

This sequence belongs to the RuvC family. Homodimer which binds Holliday junction (HJ) DNA. The HJ becomes 2-fold symmetrical on binding to RuvC with unstacked arms; it has a different conformation from HJ DNA in complex with RuvA. In the full resolvosome a probable DNA-RuvA(4)-RuvB(12)-RuvC(2) complex forms which resolves the HJ. The cofactor is Mg(2+).

Its subcellular location is the cytoplasm. It catalyses the reaction Endonucleolytic cleavage at a junction such as a reciprocal single-stranded crossover between two homologous DNA duplexes (Holliday junction).. Its function is as follows. The RuvA-RuvB-RuvC complex processes Holliday junction (HJ) DNA during genetic recombination and DNA repair. Endonuclease that resolves HJ intermediates. Cleaves cruciform DNA by making single-stranded nicks across the HJ at symmetrical positions within the homologous arms, yielding a 5'-phosphate and a 3'-hydroxyl group; requires a central core of homology in the junction. The consensus cleavage sequence is 5'-(A/T)TT(C/G)-3'. Cleavage occurs on the 3'-side of the TT dinucleotide at the point of strand exchange. HJ branch migration catalyzed by RuvA-RuvB allows RuvC to scan DNA until it finds its consensus sequence, where it cleaves and resolves the cruciform DNA. This is Crossover junction endodeoxyribonuclease RuvC from Saccharopolyspora erythraea (strain ATCC 11635 / DSM 40517 / JCM 4748 / NBRC 13426 / NCIMB 8594 / NRRL 2338).